The sequence spans 289 residues: Cytochrome bc1 complex cytochrome c subunit (289 aa).

A compositionally biased stretch (basic residues) spans 1-11 (MKKLGFTRSSR). Residues 1 to 28 (MKKLGFTRSSRRCSQPQEREQESERSRR) are disordered. Residues 37-55 (GLLLLVALTVSGGLAAVLT) form a helical membrane-spanning segment. Cytochrome c domains lie at 69 to 149 (ALLR…QANG) and 170 to 248 (TDLG…RTVI). Heme c is bound by residues cysteine 82, cysteine 85, histidine 86, cysteine 183, cysteine 186, and histidine 187. The chain crosses the membrane as a helical span at residues 267–287 (GMAIWIIGMVTAIGLALWIGA).

As to quaternary structure, the cytochrome bc1 complex is composed of a cytochrome b (QcrB), the Rieske iron-sulfur protein (QcrA) and a diheme cytochrome c (QcrC) subunit. Post-translationally, binds 2 heme c groups covalently per subunit.

It is found in the cell membrane. The enzyme catalyses a quinol + 2 Fe(III)-[cytochrome c](out) = a quinone + 2 Fe(II)-[cytochrome c](out) + 2 H(+)(out). Functionally, cytochrome b subunit of the cytochrome bc1 complex, an essential component of the respiratory electron transport chain required for ATP synthesis. The bc1 complex catalyzes the oxidation of ubiquinol and the reduction of cytochrome c in the respiratory chain. The bc1 complex operates through a Q-cycle mechanism that couples electron transfer to generation of the proton gradient that drives ATP synthesis. This is Cytochrome bc1 complex cytochrome c subunit (qcrC) from Mycobacterium leprae (strain TN).